Consider the following 119-residue polypeptide: Flagellar transcriptional regulator FlhD (119 aa).

This sequence belongs to the FlhD family. In terms of assembly, homodimer; disulfide-linked. Forms a heterohexamer composed of two FlhC and four FlhD subunits. Each FlhC binds a FlhD dimer, forming a heterotrimer, and a hexamer assembles by dimerization of two heterotrimers.

It localises to the cytoplasm. Its function is as follows. Functions in complex with FlhC as a master transcriptional regulator that regulates transcription of several flagellar and non-flagellar operons by binding to their promoter region. Activates expression of class 2 flagellar genes, including fliA, which is a flagellum-specific sigma factor that turns on the class 3 genes. Also regulates genes whose products function in a variety of physiological pathways. The polypeptide is Flagellar transcriptional regulator FlhD (Serratia marcescens).